A 319-amino-acid chain; its full sequence is MSGPSHVPVLLDRVVALLAPPLEREGSVLVDATLGLGGHTEAVLTRFDLARVVGIDRDPEALALAGRRLAPFGDRFTGVHAVYDELPDVLARLGLDAVDAVLFDLGVSSMQLDVRERGFAYAEDAPLDMRMDGSTGPTAADVLNTYAAADLARILREYGEERFARKIAAAVVRERAKEPFTRSGRLVELLYAEIPAPARRTGGHPAKRTFQALRMEVNDELAVLRRAIPAAIDAIGVGGRVVVESYHSLEDRLVKQAFVAASRLDVPEDLPFVPAGHEPALRLVTRGAEKAGPEEIALNPRAASVRLRAIERTSKGAAA.

S-adenosyl-L-methionine is bound by residues 37–39 (GGH), D56, L90, D104, and Q111.

It belongs to the methyltransferase superfamily. RsmH family.

The protein resides in the cytoplasm. It carries out the reaction cytidine(1402) in 16S rRNA + S-adenosyl-L-methionine = N(4)-methylcytidine(1402) in 16S rRNA + S-adenosyl-L-homocysteine + H(+). Specifically methylates the N4 position of cytidine in position 1402 (C1402) of 16S rRNA. The protein is Ribosomal RNA small subunit methyltransferase H of Nocardioides sp. (strain ATCC BAA-499 / JS614).